A 232-amino-acid polypeptide reads, in one-letter code: MAKITKKQKALAGKVDSNKLYPLADAIGIVKEAATAKFDESIDVAVQLGIDAKKSDQVVRGAVVLPNGTGKTKRVAVFAQGAKAEEAKAAGADIVGMDDLAAMVKAGDMPFDVVIAAPDAMRVVGTLGQILGPRGLMPNPKVGTVTPDVATAVKNAKAGQVQFRVDKAGIVHGTIGRRSFDNDKLQGNLAALIDALVKAKPATSKGVYLRKVAVSSTMGLGVRVDTQTIAAS.

Belongs to the universal ribosomal protein uL1 family. As to quaternary structure, part of the 50S ribosomal subunit.

Functionally, binds directly to 23S rRNA. The L1 stalk is quite mobile in the ribosome, and is involved in E site tRNA release. Protein L1 is also a translational repressor protein, it controls the translation of the L11 operon by binding to its mRNA. This is Large ribosomal subunit protein uL1 from Variovorax paradoxus (strain S110).